Reading from the N-terminus, the 111-residue chain is UPF0375 protein ule-4 (111 aa).

A signal peptide spans 1–18 (MNSRLVLLLAVSVALVSA). N-linked (GlcNAc...) asparagine glycosylation is found at Asn23 and Asn58.

Belongs to the UPF0375 family.

It is found in the secreted. This is UPF0375 protein ule-4 from Caenorhabditis elegans.